Reading from the N-terminus, the 303-residue chain is Mycothiol acetyltransferase (303 aa).

N-acetyltransferase domains lie at 6–134 (TSLA…VEGD) and 154–303 (NEAY…QSSS). Glutamate 37 serves as a coordination point for 1D-myo-inositol 2-(L-cysteinylamino)-2-deoxy-alpha-D-glucopyranoside. Residues 75-77 (VVV) and 83-88 (RQGYGS) each bind acetyl-CoA. Positions 180, 221, and 233 each coordinate 1D-myo-inositol 2-(L-cysteinylamino)-2-deoxy-alpha-D-glucopyranoside. Acetyl-CoA is bound by residues 237–239 (VGL) and 244–250 (RRRGLGD). A 1D-myo-inositol 2-(L-cysteinylamino)-2-deoxy-alpha-D-glucopyranoside-binding site is contributed by tyrosine 271. 276 to 281 (NESARR) contributes to the acetyl-CoA binding site.

The protein belongs to the acetyltransferase family. MshD subfamily. In terms of assembly, monomer.

The catalysed reaction is 1D-myo-inositol 2-(L-cysteinylamino)-2-deoxy-alpha-D-glucopyranoside + acetyl-CoA = mycothiol + CoA + H(+). In terms of biological role, catalyzes the transfer of acetyl from acetyl-CoA to desacetylmycothiol (Cys-GlcN-Ins) to form mycothiol. The sequence is that of Mycothiol acetyltransferase from Corynebacterium diphtheriae (strain ATCC 700971 / NCTC 13129 / Biotype gravis).